The sequence spans 170 residues: Tachykinin-4 (170 aa).

An N-terminal signal peptide occupies residues 1-16 (MLPLLALFLLIGPAVS). A propeptide spanning residues 17–54 (TTTRDREDLTFGAEAESWVTVNLKGIPVPSIELKLQEL) is cleaved from the precursor. M66 carries the methionine amide modification. Positions 67-170 (GKRVEGVHPI…SQMMPRPSRP (104 aa)) are excised as a propeptide. The disordered stretch occupies residues 107–170 (QETNHQSAGP…SQMMPRPSRP (64 aa)). The segment covering 123-140 (SLQSQRGRSEPPNHQQHV) has biased composition (polar residues).

It belongs to the tachykinin family.

Its subcellular location is the secreted. Its function is as follows. Tachykinins are active peptides which excite neurons, evoke behavioral responses, are potent vasodilators and secretagogues, and contract (directly or indirectly) many smooth muscles. Hemokinin induces plasma extravasation, mast cell degranulation, muscle contraction, salivary secretion and scratching behavior. Increases sperm motility. Induces potent analgesic effects and may play a role in pain modulation. Promotes survival of bone marrow B lineage cells and of cultured LPS-stimulated pre-B cells and may act as an autocrine factor required for B-cell survival and proliferation. Lowers systemic arterial pressure following intravenous injection. Induces interferon-gamma production and may play a role in the inflammatory response. Shows potent affinity and specificity for the NK-1 receptor. The sequence is that of Tachykinin-4 from Rattus norvegicus (Rat).